The chain runs to 181 residues: Endoribonuclease YbeY (181 aa).

Zn(2+)-binding residues include H120, H124, and H130. Residues 157–181 (AGGKRPAGGADGADGAGEPGPTAAR) are disordered. A compositionally biased stretch (gly residues) spans 161–174 (RPAGGADGADGAGE).

This sequence belongs to the endoribonuclease YbeY family. It depends on Zn(2+) as a cofactor.

The protein resides in the cytoplasm. Its function is as follows. Single strand-specific metallo-endoribonuclease involved in late-stage 70S ribosome quality control and in maturation of the 3' terminus of the 16S rRNA. This Frankia alni (strain DSM 45986 / CECT 9034 / ACN14a) protein is Endoribonuclease YbeY.